The sequence spans 338 residues: Uroporphyrinogen decarboxylase (338 aa).

Residues 23–27 (RQAGR), Asp-72, Tyr-146, Thr-201, and His-312 each bind substrate.

Belongs to the uroporphyrinogen decarboxylase family. Homodimer.

It localises to the cytoplasm. It carries out the reaction uroporphyrinogen III + 4 H(+) = coproporphyrinogen III + 4 CO2. Its pathway is porphyrin-containing compound metabolism; protoporphyrin-IX biosynthesis; coproporphyrinogen-III from 5-aminolevulinate: step 4/4. In terms of biological role, catalyzes the decarboxylation of four acetate groups of uroporphyrinogen-III to yield coproporphyrinogen-III. The sequence is that of Uroporphyrinogen decarboxylase from Thermodesulfovibrio yellowstonii (strain ATCC 51303 / DSM 11347 / YP87).